A 123-amino-acid polypeptide reads, in one-letter code: Fluoride-specific ion channel FluC (123 aa).

Helical transmembrane passes span 5-25, 35-55, 67-87, and 100-120; these read IIALLIIGGGLGALTRYYISG, IGTLIVNSLASFLLGYIYGLL, IFLGTGFCGGLSTFSTFSYET, and FANITTNILVTIFLVFLGFIL. Na(+)-binding residues include glycine 75 and serine 78.

This sequence belongs to the fluoride channel Fluc/FEX (TC 1.A.43) family.

It is found in the cell membrane. The catalysed reaction is fluoride(in) = fluoride(out). Na(+) is not transported, but it plays an essential structural role and its presence is essential for fluoride channel function. Its function is as follows. Fluoride-specific ion channel. Important for reducing fluoride concentration in the cell, thus reducing its toxicity. The protein is Fluoride-specific ion channel FluC of Pyrococcus horikoshii (strain ATCC 700860 / DSM 12428 / JCM 9974 / NBRC 100139 / OT-3).